The chain runs to 405 residues: uncharacterized protein (405 aa).

A run of 12 helical transmembrane segments spans residues 19–39 (ILSIVMFNFASYLTIGLPLAV), 47–67 (VMGFSAFWAGLVISLQYFATL), 85–105 (IVVFGLCGCFLSGLGYLTAGL), 129–149 (SFAGTGSTLWGVGVVGSLHIG), 157–177 (IVTYGAMAMGAPLGVVFYHWG), 178–198 (GLQALALIIMGVALVAILLAI), 224–244 (GMALALASAGFGVIATFITLF), 252–272 (GAAFALTLFSCAFVGTRLLFP), 283–303 (VAMICFSVEIIGLLLVGVATM), 309–329 (IGVLLAGAGFSLVFPALGVVA), 344–364 (TYTVFMDLSLGVTGPLAGLVM), and 366–386 (WAGVPVIYLAAAGLVAIALLL).

Belongs to the major facilitator superfamily. YhhS family.

It is found in the cell inner membrane. This is an uncharacterized protein from Escherichia coli O157:H7.